The primary structure comprises 1444 residues: DNA polymerase III PolC-type (1444 aa).

One can recognise an Exonuclease domain in the interval 428–584 (YCVFDVETTG…FDAEATAYLA (157 aa)).

The protein belongs to the DNA polymerase type-C family. PolC subfamily.

The protein localises to the cytoplasm. It carries out the reaction DNA(n) + a 2'-deoxyribonucleoside 5'-triphosphate = DNA(n+1) + diphosphate. In terms of biological role, required for replicative DNA synthesis. This DNA polymerase also exhibits 3' to 5' exonuclease activity. The sequence is that of DNA polymerase III PolC-type from Listeria monocytogenes serovar 1/2a (strain ATCC BAA-679 / EGD-e).